Consider the following 620-residue polypeptide: 1-deoxy-D-xylulose-5-phosphate synthase (620 aa).

Thiamine diphosphate contacts are provided by residues H80 and 121-123 (GHS). D152 contacts Mg(2+). Thiamine diphosphate contacts are provided by residues 153-154 (GA), N181, Y288, and E370. Residue N181 coordinates Mg(2+).

This sequence belongs to the transketolase family. DXPS subfamily. In terms of assembly, homodimer. The cofactor is Mg(2+). Thiamine diphosphate is required as a cofactor.

The enzyme catalyses D-glyceraldehyde 3-phosphate + pyruvate + H(+) = 1-deoxy-D-xylulose 5-phosphate + CO2. It participates in metabolic intermediate biosynthesis; 1-deoxy-D-xylulose 5-phosphate biosynthesis; 1-deoxy-D-xylulose 5-phosphate from D-glyceraldehyde 3-phosphate and pyruvate: step 1/1. Functionally, catalyzes the acyloin condensation reaction between C atoms 2 and 3 of pyruvate and glyceraldehyde 3-phosphate to yield 1-deoxy-D-xylulose-5-phosphate (DXP). This is 1-deoxy-D-xylulose-5-phosphate synthase from Klebsiella pneumoniae (strain 342).